A 617-amino-acid polypeptide reads, in one-letter code: DNA mismatch repair protein MutL (617 aa).

Belongs to the DNA mismatch repair MutL/HexB family.

Its function is as follows. This protein is involved in the repair of mismatches in DNA. It is required for dam-dependent methyl-directed DNA mismatch repair. May act as a 'molecular matchmaker', a protein that promotes the formation of a stable complex between two or more DNA-binding proteins in an ATP-dependent manner without itself being part of a final effector complex. The chain is DNA mismatch repair protein MutL from Christiangramia forsetii (strain DSM 17595 / CGMCC 1.15422 / KT0803) (Gramella forsetii).